A 280-amino-acid polypeptide reads, in one-letter code: Large ribosomal subunit protein uL2 (280 aa).

2 disordered regions span residues M1–H58 and M226–R280. Composition is skewed to basic residues over residues L37–H58 and I268–R280.

Belongs to the universal ribosomal protein uL2 family. Part of the 50S ribosomal subunit. Forms a bridge to the 30S subunit in the 70S ribosome.

Its function is as follows. One of the primary rRNA binding proteins. Required for association of the 30S and 50S subunits to form the 70S ribosome, for tRNA binding and peptide bond formation. It has been suggested to have peptidyltransferase activity; this is somewhat controversial. Makes several contacts with the 16S rRNA in the 70S ribosome. The protein is Large ribosomal subunit protein uL2 of Mycolicibacterium paratuberculosis (strain ATCC BAA-968 / K-10) (Mycobacterium paratuberculosis).